Consider the following 473-residue polypeptide: DNA (cytosine-5)-methyltransferase DRM1A (473 aa).

The 42-residue stretch at 20 to 61 (SAPSALVAYFLGMGFSREMVFRAIKEIGDTDSEQILELLLTY) folds into the UBA 1 domain. Residues 84-101 (EEEDEEEDVNWDEDDTVD) are compositionally biased toward acidic residues. The disordered stretch occupies residues 84-115 (EEEDEEEDVNWDEDDTVDNFDRATYSDGSGDE). Residues 120–140 (EMSEKDEKIKSLVSMGFPEDE) enclose the UBA 2 domain. The region spanning 204–431 (VHRNLPDQAL…DSVKTIMASI (228 aa)) is the SAM-dependent MTase DRM-type domain.

The protein belongs to the class I-like SAM-binding methyltransferase superfamily. DRM-methyltransferase family.

It is found in the nucleus. It catalyses the reaction a 2'-deoxycytidine in DNA + S-adenosyl-L-methionine = a 5-methyl-2'-deoxycytidine in DNA + S-adenosyl-L-homocysteine + H(+). Its function is as follows. Involved in de novo DNA methylation. Involved in RNA-directed DNA methylation (RdDM). The chain is DNA (cytosine-5)-methyltransferase DRM1A from Oryza sativa subsp. japonica (Rice).